The primary structure comprises 816 residues: MESKVVALNRESRRWKKSSFNELLKRARNQKSTICNRFTRKNTPNILVTFTSRLTLLRPTFFNFACWHSAMEIFESMSFSVKFDKELLPIGRHGLTAGWLIESLGQLLNSDNIRNIKCSQLGTDGFVSQIMRVVIEFTNNQTKKYIVKMPETTNIKAALEKTTQQKMPEGADEQFIGGLTMFFNREVEYYAMEKIPGLRTPKCYHAQQWDNGKTTGAIVMQDLEGMVSVPYYESLNLQQIASIGSQMLNLHLFSIGMSDEWRQKFPFPMELIDTVSNMTDIVKLYVSRNPELEEGFSKVEKMYQDRELFTKVLRDSHKSLGIDDFLCHGDLWFYNLMWIPRKSGSEVASNHLGSIIDWQNVHTGNICEDFCHMLTFCCDTEIRRQAENTFLPYYYNQLKAKAVEAGKKLNLTLNQFLRAYRRNFIAHALHLPFIVSIMLCVKPADDEIVQKIRNQMSGALWSAAQFAVTSYVCVRVLKFLYIMCKSVLVHFITPKHDLDYLKDTWTVITGGTDGIGKAYIEELCKTRGLKKFYLIGRNIDKLNNTKKELVEQHGCEVMCHVHDFEKDDLSALPKDLETLDVGILINCAGIAPHIIGTLTELPEGLASKILRVNLMSAVKMTEMILPNMVKKKRGIIVNISSMTGWRRFRTSVLTRLAKLHYPSSPTPCQMNTEELEFVFSVSFQCSLLPRSPRMKLKKRTISSLSPLKTLPNKLSELSGLIGKSQRAVCNMMFRLPLEHCSPFGFSKYFSSLLLCSEFISIVLPLIKRRTRERIIRVFIISRLSIFVHFYHDFFLLNAIFQIKKFSCELNFLESFF.

503-534 (DTWTVITGGTDGIGKAYIEELCKTRGLKKFYL) provides a ligand contact to NADP(+). S641 contributes to the substrate binding site. Residue Y661 is the Proton acceptor of the active site. 2 helical membrane-spanning segments follow: residues 743 to 763 (FGFS…SIVL) and 777 to 797 (VFII…FLLN).

This sequence belongs to the short-chain dehydrogenases/reductases (SDR) family.

The protein localises to the membrane. This is an uncharacterized protein from Caenorhabditis elegans.